The primary structure comprises 426 residues: Serine--tRNA ligase (426 aa).

The tract at residues 103–129 (VPNLPDDSVPTGKDENDNPEIRRWGTP) is disordered. Over residues 114 to 125 (GKDENDNPEIRR) the composition is skewed to basic and acidic residues. L-serine is bound at residue 230–232 (TAE). 261 to 263 (RSE) contributes to the ATP binding site. Residue Glu284 participates in L-serine binding. Residue 348–351 (EISS) participates in ATP binding. Ser384 is a binding site for L-serine.

Belongs to the class-II aminoacyl-tRNA synthetase family. Type-1 seryl-tRNA synthetase subfamily. As to quaternary structure, homodimer. The tRNA molecule binds across the dimer.

The protein localises to the cytoplasm. It carries out the reaction tRNA(Ser) + L-serine + ATP = L-seryl-tRNA(Ser) + AMP + diphosphate + H(+). The enzyme catalyses tRNA(Sec) + L-serine + ATP = L-seryl-tRNA(Sec) + AMP + diphosphate + H(+). The protein operates within aminoacyl-tRNA biosynthesis; selenocysteinyl-tRNA(Sec) biosynthesis; L-seryl-tRNA(Sec) from L-serine and tRNA(Sec): step 1/1. Its function is as follows. Catalyzes the attachment of serine to tRNA(Ser). Is also able to aminoacylate tRNA(Sec) with serine, to form the misacylated tRNA L-seryl-tRNA(Sec), which will be further converted into selenocysteinyl-tRNA(Sec). The chain is Serine--tRNA ligase from Dichelobacter nodosus (strain VCS1703A).